Here is a 123-residue protein sequence, read N- to C-terminus: MPTIKQLIRNTRQPVRNVTKSPALRGCPQRRGTCTRVYTITPKKPNSALRKVARVRLTSGFEITAYIPGIGHNLQEHSVVLVRGGRVKDLPGVRYHIVRGTLDAVGVKDRQQGRSKYGVKKPK.

The protein belongs to the universal ribosomal protein uS12 family. Part of the 30S ribosomal subunit.

The protein localises to the plastid. Its subcellular location is the chloroplast. In terms of biological role, with S4 and S5 plays an important role in translational accuracy. Located at the interface of the 30S and 50S subunits. In Platanus occidentalis (Sycamore), this protein is Small ribosomal subunit protein uS12cz/uS12cy (rps12-A).